Here is a 146-residue protein sequence, read N- to C-terminus: VHWTAEEKQLICSLWGKIDVGLIGGETLAGLLVIYPWTQRQFSHFGNLSSPTAIAGNPRVKAHGKKVLTSFGDAIKNLDNIKDTFAKLSELHCDKLHVDPTNFKLLGNVLVIVLADHHGKEFTPAHHAAYQKLVNVVSHSLARRYH.

Residues 2-146 (HWTAEEKQLI…VSHSLARRYH (145 aa)) form the Globin domain. The heme b site is built by His-63 and His-92.

This sequence belongs to the globin family. In terms of assembly, the major hemoglobin component (HbIII) is a tetramer of two alpha-2 chains and two beta-1 chains. In terms of tissue distribution, red blood cells.

Functionally, involved in oxygen transport from the lung to the various peripheral tissues. The protein is Hemoglobin subunit beta-1 (HBB1) of Varanus albigularis (White-throated monitor).